The sequence spans 453 residues: Chromosomal replication initiator protein DnaA (453 aa).

Residues 1-73 (MSKEEIWDKV…ADLIEKAIGT (73 aa)) are domain I, interacts with DnaA modulators. The tract at residues 73-114 (TKLMPNFVIQEDLTEDKQVKDSAKAKSEAKPDVQAPQNSSED) is domain II. Positions 91-103 (VKDSAKAKSEAKP) are enriched in basic and acidic residues. The segment at 91–113 (VKDSAKAKSEAKPDVQAPQNSSE) is disordered. A domain III, AAA+ region region spans residues 115–331 (QFNVHNTFET…GALTRVIAYS (217 aa)). ATP contacts are provided by Gly-159, Gly-161, Lys-162, and Thr-163. Positions 332–453 (RLQNEAITTE…ENLEKEIRNQ (122 aa)) are domain IV, binds dsDNA.

Belongs to the DnaA family. In terms of assembly, oligomerizes as a right-handed, spiral filament on DNA at oriC.

Its subcellular location is the cytoplasm. Its function is as follows. Plays an essential role in the initiation and regulation of chromosomal replication. ATP-DnaA binds to the origin of replication (oriC) to initiate formation of the DNA replication initiation complex once per cell cycle. Binds the DnaA box (a 9 base pair repeat at the origin) and separates the double-stranded (ds)DNA. Forms a right-handed helical filament on oriC DNA; dsDNA binds to the exterior of the filament while single-stranded (ss)DNA is stabiized in the filament's interior. The ATP-DnaA-oriC complex binds and stabilizes one strand of the AT-rich DNA unwinding element (DUE), permitting loading of DNA polymerase. After initiation quickly degrades to an ADP-DnaA complex that is not apt for DNA replication. Binds acidic phospholipids. In Staphylococcus carnosus (strain TM300), this protein is Chromosomal replication initiator protein DnaA.